Consider the following 359-residue polypeptide: uncharacterized protein (359 aa).

Over residues 73 to 88 (AATAGTTPATGASGSA) the composition is skewed to low complexity. The segment at 73–93 (AATAGTTPATGASGSARPTDA) is disordered. In terms of domain architecture, Macro spans 179 to 354 (PSTCRGDNVS…AFSAAIQAGE (176 aa)).

This is an uncharacterized protein from Mycobacterium tuberculosis (strain ATCC 25618 / H37Rv).